A 395-amino-acid polypeptide reads, in one-letter code: F-box/kelch-repeat protein SKIP25 (395 aa).

A disordered region spans residues 1–29 (MEKKLKRRESMSTTAAESPPAKRRRTVTG). An F-box domain is found at 34–79 (ALIEGLPDHISEICLSLVHRPSLLSAVCTRWRRLLYSPEFPSFPSL). Kelch repeat units lie at residues 81 to 129 (ALFV…YRHP), 147 to 194 (LILI…ACDG), 196 to 245 (IYIA…FSRE), 246 to 299 (AIDA…AMEE), and 301 to 342 (ILYS…TQVT).

As to quaternary structure, part of a SCF (ASK-cullin-F-box) protein ligase complex. Interacts with SKP1A/ASK1.

The protein resides in the nucleus. Its pathway is protein modification; protein ubiquitination. Its function is as follows. Component of SCF(ASK-cullin-F-box) E3 ubiquitin ligase complexes, which may mediate the ubiquitination and subsequent proteasomal degradation of target proteins. The protein is F-box/kelch-repeat protein SKIP25 (SKIP25) of Arabidopsis thaliana (Mouse-ear cress).